A 354-amino-acid chain; its full sequence is DNA polymerase IV (354 aa).

Residues 8-189 enclose the UmuC domain; the sequence is IIHVDMDCFY…LPLEKIPGVG (182 aa). Residues Asp12 and Asp107 each coordinate Mg(2+). Residue Glu108 is part of the active site.

This sequence belongs to the DNA polymerase type-Y family. In terms of assembly, monomer. Mg(2+) is required as a cofactor.

The protein resides in the cytoplasm. It catalyses the reaction DNA(n) + a 2'-deoxyribonucleoside 5'-triphosphate = DNA(n+1) + diphosphate. Functionally, poorly processive, error-prone DNA polymerase involved in untargeted mutagenesis. Copies undamaged DNA at stalled replication forks, which arise in vivo from mismatched or misaligned primer ends. These misaligned primers can be extended by PolIV. Exhibits no 3'-5' exonuclease (proofreading) activity. May be involved in translesional synthesis, in conjunction with the beta clamp from PolIII. The sequence is that of DNA polymerase IV from Vibrio parahaemolyticus serotype O3:K6 (strain RIMD 2210633).